A 428-amino-acid chain; its full sequence is Palmitoyltransferase pfa4 (428 aa).

Topologically, residues 1-10 (MLCRSFNISQ) are cytoplasmic. Residues 11-31 (LAIPFVSVLISFLAYTSQLFF) traverse the membrane as a helical segment. Over 32 to 43 (YYFEEAPLRSEE) the chain is Lumenal. Residues 44–61 (FWRLNIFAVCIWVCYYRA) form a helical membrane-spanning segment. Residues 62–134 (CTVDPGRIPK…SNCVSHFTYP (73 aa)) lie on the Cytoplasmic side of the membrane. Positions 91-141 (RWCRRCEAFKPPRAHHCKTCQRCIPKMDHHCPWTSNCVSHFTYPHFMRFLF) constitute a DHHC domain. Cys-121 functions as the S-palmitoyl cysteine intermediate in the catalytic mechanism. Residues 135–155 (HFMRFLFYAVVGMGYLETLLF) form a helical membrane-spanning segment. The Lumenal segment spans residues 156-177 (ERASIVWASRHLPSYLGPGLGQ). Residues 178–198 (LVHLFILLVVNSLTWLALFIL) traverse the membrane as a helical segment. At 199–428 (LLRSIWSLAL…GILMQRRRQQ (230 aa)) the chain is on the cytoplasmic side. The disordered stretch occupies residues 339 to 400 (QRSNDASHSG…WKNSEGDRLR (62 aa)). Residues 360–373 (DRFNENKAKERLSE) show a composition bias toward basic and acidic residues. Residues 374 to 388 (SESDFSDDEEVQDGE) are compositionally biased toward acidic residues. Basic and acidic residues predominate over residues 389 to 400 (EGWKNSEGDRLR).

It belongs to the DHHC palmitoyltransferase family. PFA4 subfamily.

The protein resides in the endoplasmic reticulum membrane. The enzyme catalyses L-cysteinyl-[protein] + hexadecanoyl-CoA = S-hexadecanoyl-L-cysteinyl-[protein] + CoA. In terms of biological role, mediates the reversible addition of palmitate to target proteins, thereby regulating their membrane association and biological function. This chain is Palmitoyltransferase pfa4, found in Aspergillus fumigatus (strain ATCC MYA-4609 / CBS 101355 / FGSC A1100 / Af293) (Neosartorya fumigata).